Consider the following 435-residue polypeptide: MDFLISTSLSESTSTSADFCVVCGDKAIGKHYGAVACNGCKGFFRRSVWQNLQYTCRFNKQCNIDKDHRNACRYCRFQKCLADGMKPEAIQNERDRIGSTKRRKRSGANSENNSDSEGTPSPKIEVMGNSVSRKLIEMLLDIEHRLASNQSMNALLRDESEMKNSRQRAVNYLIGWTNMLHPLPEVPLADKVLLLKKFSSAFTLLGTLQRSMALPHFVLPNDQVLSISASHPPELFEALTRIIDELLTPLRRLRTDHAEFSCLKALLLLNPDVVGISNNTRERIREARDALLKTLFAYMSNTQNSIDASLRVSSLLMIIPSLISVSSSIMEFPALSDLFGLGDVIKRDTISPKIETPPLEMKPMMPKIAQPPVTSAPTVPTNIMMNKDLISQIMNNPQLFPLLPMPQTASPPMSFMGQSEFGCHLQSMPVKVILS.

The segment at residues 17 to 92 is a DNA-binding region (nuclear receptor); that stretch reads ADFCVVCGDK…DGMKPEAIQN (76 aa). 2 consecutive NR C4-type zinc fingers follow at residues 20–40 and 56–80; these read CVVC…CNGC and CRFN…FQKC. A disordered region spans residues 91 to 126; it reads QNERDRIGSTKRRKRSGANSENNSDSEGTPSPKIEV. The span at 107–119 shows a compositional bias: polar residues; that stretch reads GANSENNSDSEGT. The region spanning 131–355 is the NR LBD domain; it reads VSRKLIEMLL…KRDTISPKIE (225 aa).

The protein belongs to the nuclear hormone receptor family. In terms of tissue distribution, expressed in intestine and head neurons in young adults.

Its subcellular location is the nucleus. In terms of biological role, orphan nuclear receptor. Transcriptional repressor of intestinal metal transporter smf-3 and genes of the innate immune response. Inhibits nuclear localization of transcription factor pqm-1; in response to pathogen stress, may facilitate translocation of pqm-1, leading to transcriptional activation of genes involved in innate immunity and iron uptake. The sequence is that of Nuclear hormone receptor family member nhr-14 (nhr-14) from Caenorhabditis elegans.